Consider the following 647-residue polypeptide: C2H2 finger domain transcription factor USV101 (647 aa).

Over residues 1 to 10 (MSFVAPDDRA) the composition is skewed to basic and acidic residues. Residues 1–132 (MSFVAPDDRA…ATGYTPDGQP (132 aa)) are disordered. 2 stretches are compositionally biased toward polar residues: residues 27–54 (ESTS…SPNQ) and 66–84 (SSHS…STAY). The span at 97–122 (PTQQQQQQQSEQHIPSPPSSSNRPPS) shows a compositional bias: low complexity. 2 consecutive C2H2-type zinc fingers follow at residues 144 to 169 (FRCR…VRKH) and 175 to 197 (FPCH…ATVH). A disordered region spans residues 220-647 (QRASREQRRR…VKQQDDKKTQ (428 aa)). The segment covering 222 to 248 (ASREQRRRGEVVEVPKGAVERRRETRK) has biased composition (basic and acidic residues). Residues 249 to 259 (AQAAAAQAAAA) show a composition bias toward low complexity. The segment covering 261–278 (GHSQQNSPYAQYHESQWN) has biased composition (polar residues). Composition is skewed to low complexity over residues 312 to 327 (SSSA…YDSA), 404 to 414 (HGAYPPHDAAA), and 421 to 434 (GYYH…GSYP). Residues 504–515 (RAEDDFGKDDRK) are compositionally biased toward basic and acidic residues. Residues 521-540 (SPSNSQVPDSSTAAHANGAH) are compositionally biased toward low complexity. Positions 628 to 647 (VDKEREKKEEVKQQDDKKTQ) are enriched in basic and acidic residues.

It localises to the nucleus. The protein localises to the cytoplasm. Functionally, transcription factor that promotes pheromone gene expression, which results in a subsequent increase in cell fusion. Also promotes production of melanin and capsule and thereby is required for full virulence. This chain is C2H2 finger domain transcription factor USV101, found in Cryptococcus neoformans var. grubii serotype A (strain H99 / ATCC 208821 / CBS 10515 / FGSC 9487) (Filobasidiella neoformans var. grubii).